Reading from the N-terminus, the 295-residue chain is Taste receptor type 2 member 120 (295 aa).

Residues 1-5 lie on the Extracellular side of the membrane; it reads MNLVE. A helical membrane pass occupies residues 6-26; the sequence is WIVTIIMMTEFLLGNCANVFI. The Cytoplasmic segment spans residues 27–45; that stretch reads TIVNFIDCVKRRKISSADR. Residues 46 to 66 traverse the membrane as a helical segment; sequence IITAIAIFRIGLLWAMLTNWH. The Extracellular segment spans residues 67–80; the sequence is SHVFTPDTDNLQMR. A helical membrane pass occupies residues 81-101; sequence VFGGITWAITNHFTTWLGTIL. At 102-127 the chain is on the cytoplasmic side; the sequence is SMFYLFKIANFSNSLFLHLKRKLDNV. A helical transmembrane segment spans residues 128–148; sequence LLVIFLGSSLFLVAYLGMVNI. Over 149-177 the chain is Extracellular; that stretch reads KKIAWMSIHEGNVTTKSKLKHVTSITNML. A glycan (N-linked (GlcNAc...) asparagine) is linked at N160. Residues 178–198 traverse the membrane as a helical segment; that stretch reads LFSLINIVPFGISLNCVLLLI. Over 199-228 the chain is Cytoplasmic; that stretch reads YSLSKHLKNMKFYGKGCQDQSTMVHIKALQ. Residues 229 to 249 form a helical membrane-spanning segment; it reads TVVSFLLLYATYSSCVIISGW. The Extracellular segment spans residues 250 to 255; that stretch reads SLQNAP. The chain crosses the membrane as a helical span at residues 256–276; it reads VFLFCVTIGSFYPAGHSCILI. Topologically, residues 277–295 are cytoplasmic; sequence WGNQKLKQVFLLLLRQMRC.

Belongs to the G-protein coupled receptor T2R family.

The protein resides in the membrane. Putative taste receptor which may play a role in the perception of bitterness. This chain is Taste receptor type 2 member 120, found in Mus musculus (Mouse).